Reading from the N-terminus, the 433-residue chain is MEQIIVHGGNTKLEGTVKIEGAKNAVLPILAATLLAEEGVTTLKNVPILSDVFTMNQVIKHLNVAIDFDEDANEVTIDATQPLGIEANYEYVSKMRASIVVMGPLLARNGHAKVAMPGGCAIGKRPIDLHLKGFQALGAKIIQKNGYIEAIADELIGNTIYLDFPSVGATQNIMMAAVRAKGTTIIENVAREPEIVDLANILNKMGANVIGAGTETMRIEGVDKLHAVEHSIVQDRIEAGTFMVAAAMTEGNVLIEEAISEHNRPLISKLTEMGAIIEEEENGIRVIGPKHLKPTDVKTMPHPGFPTDMQAQMTAIQMFAEGTSIVTETVFENRYQHLEEMRRMNADLKIDGNIAVINGGNELQGAAVEATDLRAAAALILVGLRANGITRVSNLKYLDRGYYEFHKKLQKLGANVERVNDEKIEEKQATTVI.

23 to 24 (KN) provides a ligand contact to phosphoenolpyruvate. R96 serves as a coordination point for UDP-N-acetyl-alpha-D-glucosamine. The active-site Proton donor is C120. A 2-(S-cysteinyl)pyruvic acid O-phosphothioketal modification is found at C120. UDP-N-acetyl-alpha-D-glucosamine is bound by residues 125-129 (RPIDL), D308, and V330.

It belongs to the EPSP synthase family. MurA subfamily.

It is found in the cytoplasm. It carries out the reaction phosphoenolpyruvate + UDP-N-acetyl-alpha-D-glucosamine = UDP-N-acetyl-3-O-(1-carboxyvinyl)-alpha-D-glucosamine + phosphate. It participates in cell wall biogenesis; peptidoglycan biosynthesis. Its function is as follows. Cell wall formation. Adds enolpyruvyl to UDP-N-acetylglucosamine. This chain is UDP-N-acetylglucosamine 1-carboxyvinyltransferase 2, found in Enterococcus faecalis (strain ATCC 700802 / V583).